Consider the following 258-residue polypeptide: Mediator of RNA polymerase II transcription subunit 18 (258 aa).

This sequence belongs to the Mediator complex subunit 18 family. As to quaternary structure, component of the Mediator complex.

It is found in the nucleus. Functionally, component of the Mediator complex, a coactivator involved in the regulated transcription of nearly all RNA polymerase II-dependent genes. Mediator functions as a bridge to convey information from gene-specific regulatory proteins to the basal RNA polymerase II transcription machinery. Mediator is recruited to promoters by direct interactions with regulatory proteins and serves as a scaffold for the assembly of a functional preinitiation complex with RNA polymerase II and the general transcription factors. In Eremothecium gossypii (strain ATCC 10895 / CBS 109.51 / FGSC 9923 / NRRL Y-1056) (Yeast), this protein is Mediator of RNA polymerase II transcription subunit 18 (SRB5).